We begin with the raw amino-acid sequence, 140 residues long: Putative pre-16S rRNA nuclease (140 aa).

The protein belongs to the YqgF nuclease family.

It is found in the cytoplasm. Functionally, could be a nuclease involved in processing of the 5'-end of pre-16S rRNA. The sequence is that of Putative pre-16S rRNA nuclease from Serratia proteamaculans (strain 568).